We begin with the raw amino-acid sequence, 601 residues long: Polypeptide N-acetylgalactosaminyltransferase 11 (601 aa).

Over 1–7 (MGSAALR) the chain is Cytoplasmic. The helical; Signal-anchor for type II membrane protein transmembrane segment at 8 to 28 (CFCYGCLFTSVTWTLLLFIYF) threads the bilayer. 2 N-linked (GlcNAc...) asparagine glycosylation sites follow: asparagine 29 and asparagine 202. Residues 29–601 (NFSEESQGFR…SPSQQWHLEN (573 aa)) are Lumenal-facing. The segment at 143–254 (LPMASIVICF…EMWLQPLLAP (112 aa)) is catalytic subdomain A. The segment at 312–374 (PFRSPTMAGG…PCSRVGHIFR (63 aa)) is catalytic subdomain B. The 132-residue stretch at 469 to 600 (RPKILQRGRL…GSPSQQWHLE (132 aa)) folds into the Ricin B-type lectin domain. Cysteine 486 and cysteine 505 are disulfide-bonded. An N-linked (GlcNAc...) asparagine glycan is attached at asparagine 508. Disulfide bonds link cysteine 529/cysteine 546 and cysteine 571/cysteine 589.

The protein belongs to the glycosyltransferase 2 family. GalNAc-T subfamily. Interacts with notch1. It depends on Mn(2+) as a cofactor. Requires Ca(2+) as cofactor.

It localises to the golgi apparatus membrane. The enzyme catalyses L-seryl-[protein] + UDP-N-acetyl-alpha-D-galactosamine = a 3-O-[N-acetyl-alpha-D-galactosaminyl]-L-seryl-[protein] + UDP + H(+). It carries out the reaction L-threonyl-[protein] + UDP-N-acetyl-alpha-D-galactosamine = a 3-O-[N-acetyl-alpha-D-galactosaminyl]-L-threonyl-[protein] + UDP + H(+). Its pathway is protein modification; protein glycosylation. Polypeptide N-acetylgalactosaminyltransferase that catalyzes the initiation of protein O-linked glycosylation and is involved in left/right asymmetry by mediating O-glycosylation of NOTCH1. O-glycosylation of NOTCH1 promotes activation of NOTCH1, modulating the balance between motile and immotile (sensory) cilia at the left-right organiser (LRO). Polypeptide N-acetylgalactosaminyltransferases catalyze the transfer of an N-acetyl-D-galactosamine residue to a serine or threonine residue on the protein receptor. The sequence is that of Polypeptide N-acetylgalactosaminyltransferase 11 (galnt11) from Xenopus tropicalis (Western clawed frog).